Reading from the N-terminus, the 204-residue chain is FMN-dependent NADH:quinone oxidoreductase 2 (204 aa).

FMN is bound by residues Ser-10 and 16–18 (SIS).

Belongs to the azoreductase type 1 family. In terms of assembly, homodimer. It depends on FMN as a cofactor.

The catalysed reaction is 2 a quinone + NADH + H(+) = 2 a 1,4-benzosemiquinone + NAD(+). It catalyses the reaction N,N-dimethyl-1,4-phenylenediamine + anthranilate + 2 NAD(+) = 2-(4-dimethylaminophenyl)diazenylbenzoate + 2 NADH + 2 H(+). In terms of biological role, quinone reductase that provides resistance to thiol-specific stress caused by electrophilic quinones. Its function is as follows. Also exhibits azoreductase activity. Catalyzes the reductive cleavage of the azo bond in aromatic azo compounds to the corresponding amines. This chain is FMN-dependent NADH:quinone oxidoreductase 2, found in Jannaschia sp. (strain CCS1).